Reading from the N-terminus, the 488-residue chain is Zinc finger protein 345 (488 aa).

15 C2H2-type zinc fingers span residues 62–84 (LECK…QRIH), 90–112 (YECK…QRIH), 118–140 (FECK…QRIH), 146–168 (YECK…QIIH), 174–196 (YECK…HRIH), 202–224 (YECI…RRIH), 230–252 (YECK…QRIH), 258–280 (YICN…QRIH), 286–308 (YVCK…QRIH), 314–336 (YECK…QRMH), 342–364 (YECK…HRIH), 370–392 (YECK…QLIH), 398–420 (YECK…QRIH), 426–448 (YECK…QRIH), and 454–476 (YECK…KKSH).

This sequence belongs to the krueppel C2H2-type zinc-finger protein family.

Its subcellular location is the nucleus. Its function is as follows. May be involved in transcriptional regulation. The protein is Zinc finger protein 345 (ZNF345) of Homo sapiens (Human).